The sequence spans 382 residues: Transforming growth factor beta-1 proprotein (382 aa).

Residues 1 to 21 form the signal peptide; the sequence is MEVLWMLLVLLVLHLSSLAMS. Residues 22–65 are straightjacket domain; the sequence is LSTCKAVDMEEVRKRRIEAIRGQILSKLKLDKTPDVDSEKMTVP. The segment at 66–263 is arm domain; the sequence is SEAIFLYNST…SMPAERIDTV (198 aa). N-linked (GlcNAc...) asparagine glycans are attached at residues Asn73, Asn123, and Asn166. Residues 218–242 form a bowtie tail region; the sequence is PTPQAKDIDIEGFPALRGDLASLSS. The Cell attachment site signature appears at 234 to 236; sequence RGD. Intrachain disulfides connect Cys277–Cys286, Cys285–Cys348, Cys314–Cys379, and Cys318–Cys381.

Belongs to the TGF-beta family. As to quaternary structure, latency-associated peptide: Homodimer; disulfide-linked. Latency-associated peptide: Interacts with Transforming growth factor beta-1 (TGF-beta-1) chain; interaction is non-covalent and maintains (TGF-beta-1) in a latent state; each Latency-associated peptide (LAP) monomer interacts with TGF-beta-1 in the other monomer. Transforming growth factor beta-1: Homodimer; disulfide-linked. Transforming growth factor beta-1: Interacts with TGF-beta receptors (tgfbr1 and tgfbr2), leading to signal transduction. In terms of processing, transforming growth factor beta-1 proprotein: The precursor proprotein is cleaved in the Golgi apparatus to form Transforming growth factor beta-1 (TGF-beta-1) and Latency-associated peptide (LAP) chains, which remain non-covalently linked, rendering TGF-beta-1 inactive.

It localises to the secreted. Its subcellular location is the extracellular space. The protein localises to the extracellular matrix. In terms of biological role, transforming growth factor beta-1 proprotein: Precursor of the Latency-associated peptide (LAP) and Transforming growth factor beta-1 (TGF-beta-1) chains, which constitute the regulatory and active subunit of TGF-beta-1, respectively. Required to maintain the Transforming growth factor beta-1 (TGF-beta-1) chain in a latent state during storage in extracellular matrix. Associates non-covalently with TGF-beta-1 and regulates its activation via interaction with 'milieu molecules', such as LTBP1, LRRC32/GARP and LRRC33/NRROS, that control activation of TGF-beta-1. Interaction with integrins (ITGAV:ITGB6 or ITGAV:ITGB8) results in distortion of the Latency-associated peptide chain and subsequent release of the active TGF-beta-1. Functionally, transforming growth factor beta-1: Multifunctional protein that regulates the growth and differentiation of various cell types and is involved in various processes, such as normal development, immune function, microglia function and responses to neurodegeneration. Activation into mature form follows different steps: following cleavage of the proprotein in the Golgi apparatus, Latency-associated peptide (LAP) and Transforming growth factor beta-1 (TGF-beta-1) chains remain non-covalently linked rendering TGF-beta-1 inactive during storage in extracellular matrix. At the same time, LAP chain interacts with 'milieu molecules', such as ltbp1, lrrc32/garp and lrrc33/nrros that control activation of TGF-beta-1 and maintain it in a latent state during storage in extracellular milieus. TGF-beta-1 is released from LAP by integrins (ITGAV:ITGB6 or ITGAV:ITGB8): integrin-binding to LAP stabilizes an alternative conformation of the LAP bowtie tail and results in distortion of the LAP chain and subsequent release of the active TGF-beta-1. Once activated following release of LAP, TGF-beta-1 acts by binding to TGF-beta receptors (tgfbr1 and tgfbr2), which transduce signal. While expressed by many cells types, TGF-beta-1 only has a very localized range of action within cell environment thanks to fine regulation of its activation by Latency-associated peptide chain (LAP) and 'milieu molecules'. Plays an important role in bone remodeling: acts as a potent stimulator of osteoblastic bone formation. Can promote either T-helper 17 cells (Th17) or regulatory T-cells (Treg) lineage differentiation in a concentration-dependent manner. Can induce epithelial-to-mesenchymal transition (EMT) and cell migration in various cell types. This Xenopus laevis (African clawed frog) protein is Transforming growth factor beta-1 proprotein (tgfb1).